A 397-amino-acid chain; its full sequence is Cercosporin biosynthesis regulatory protein CTB8 (397 aa).

Residues 26-53 (CTHCSSQKIRCTKERPACARCVNKGLLC) constitute a DNA-binding region (zn(2)-C6 fungal-type). Disordered stretches follow at residues 62–92 (GTRRHSVRATPEPETTISNAPTSSVPPDSVK) and 173–198 (AEASTRPSSSSSPPSQRSDGGRATTH). The span at 74 to 87 (PETTISNAPTSSVP) shows a compositional bias: polar residues. A compositionally biased stretch (low complexity) spans 179-197 (PSSSSSPPSQRSDGGRATT).

The protein localises to the nucleus. In terms of biological role, transcription regulator of the gene cluster that mediates the biosynthesis of cercosporin, a light-activated, non-host-selective toxin. The perylenequinone chromophore of cercosporin absorbs light energy to attain an electronically-activated triplet state and produces active oxygen species such as the hydroxyl radical, superoxide, hydrogen peroxide or singlet oxygen upon reaction with oxygen molecules. These reactive oxygen species cause damage to various cellular components including lipids, proteins and nucleic acids. The polypeptide is Cercosporin biosynthesis regulatory protein CTB8 (Cercospora nicotianae (Barn spot disease fungus)).